The sequence spans 273 residues: Transposable element Tc1 transposase (273 aa).

The protein belongs to the transposase 5 family.

It localises to the nucleus. Probably essential for transposable element Tc1 transposition. The insertion of Tc1 is the main cause of spontaneous mutations. It is an endonuclease which can produce a single strand nick at the 5'-end of the transposon. The sequence is that of Transposable element Tc1 transposase (tc1a) from Caenorhabditis elegans.